We begin with the raw amino-acid sequence, 391 residues long: Inhibin beta B chain (391 aa).

An N-terminal signal peptide occupies residues 1–25 (MDGAARRGVLAALLACGLLLLGAAA). A propeptide spanning residues 26–276 (TPTPPPAGSS…ADNKHRIRKR (251 aa)) is cleaved from the precursor. Residues 27–47 (PTPPPAGSSPQDTCTSCGFRR) are disordered. Asn-77 is a glycosylation site (N-linked (GlcNAc...) asparagine). 4 disulfides stabilise this stretch: Cys-280–Cys-288, Cys-287–Cys-356, Cys-316–Cys-388, and Cys-320–Cys-390.

This sequence belongs to the TGF-beta family. In terms of assembly, dimeric, linked by one or more disulfide bonds. Inhibin A is a dimer of alpha and beta-A. Inhibin B is a dimer of alpha and beta-B. Activin A is a homodimer of beta-A. Activin B is a homodimer of beta-B. Activin AB is a dimer of beta-A and beta-B.

The protein resides in the secreted. Its function is as follows. Inhibins and activins inhibit and activate, respectively, the secretion of follitropin by the pituitary gland. Inhibins/activins are involved in regulating a number of diverse functions such as hypothalamic and pituitary hormone secretion, gonadal hormone secretion, germ cell development and maturation, erythroid differentiation, insulin secretion, nerve cell survival, embryonic axial development or bone growth, depending on their subunit composition. Inhibins appear to oppose the functions of activins. This Gallus gallus (Chicken) protein is Inhibin beta B chain (INHBB).